A 536-amino-acid polypeptide reads, in one-letter code: Chaperonin GroEL (536 aa).

Residues 29–32 (TLGP), 86–90 (DGTTT), G412, and D493 each bind ATP.

This sequence belongs to the chaperonin (HSP60) family. As to quaternary structure, forms a cylinder of 14 subunits composed of two heptameric rings stacked back-to-back. Interacts with the co-chaperonin GroES.

It is found in the cytoplasm. It catalyses the reaction ATP + H2O + a folded polypeptide = ADP + phosphate + an unfolded polypeptide.. Together with its co-chaperonin GroES, plays an essential role in assisting protein folding. The GroEL-GroES system forms a nano-cage that allows encapsulation of the non-native substrate proteins and provides a physical environment optimized to promote and accelerate protein folding. This is Chaperonin GroEL from Aster yellows witches'-broom phytoplasma (strain AYWB).